The chain runs to 501 residues: Bifunctional pantoate ligase/cytidylate kinase (501 aa).

The pantoate--beta-alanine ligase stretch occupies residues M1–S264. ATP is bound at residue M25–H32. H32 (proton donor) is an active-site residue. Q55 serves as a coordination point for (R)-pantoate. Position 55 (Q55) interacts with beta-alanine. G144–D147 is a binding site for ATP. Q150 is a (R)-pantoate binding site. ATP is bound by residues V173 and L181–R184. The cytidylate kinase stretch occupies residues F265–G501.

This sequence in the N-terminal section; belongs to the pantothenate synthetase family. It in the C-terminal section; belongs to the cytidylate kinase family. Type 1 subfamily.

It localises to the cytoplasm. It carries out the reaction (R)-pantoate + beta-alanine + ATP = (R)-pantothenate + AMP + diphosphate + H(+). It catalyses the reaction CMP + ATP = CDP + ADP. The catalysed reaction is dCMP + ATP = dCDP + ADP. Its pathway is cofactor biosynthesis; (R)-pantothenate biosynthesis; (R)-pantothenate from (R)-pantoate and beta-alanine: step 1/1. In terms of biological role, catalyzes the condensation of pantoate with beta-alanine in an ATP-dependent reaction via a pantoyl-adenylate intermediate. Its function is as follows. Catalyzes the transfer of a phosphate group from ATP to either CMP or dCMP to form CDP or dCDP and ADP, respectively. The protein is Bifunctional pantoate ligase/cytidylate kinase of Parasynechococcus marenigrum (strain WH8102).